The chain runs to 345 residues: S-adenosylmethionine:tRNA ribosyltransferase-isomerase (345 aa).

Belongs to the QueA family. As to quaternary structure, monomer.

It localises to the cytoplasm. The enzyme catalyses 7-aminomethyl-7-carbaguanosine(34) in tRNA + S-adenosyl-L-methionine = epoxyqueuosine(34) in tRNA + adenine + L-methionine + 2 H(+). It participates in tRNA modification; tRNA-queuosine biosynthesis. In terms of biological role, transfers and isomerizes the ribose moiety from AdoMet to the 7-aminomethyl group of 7-deazaguanine (preQ1-tRNA) to give epoxyqueuosine (oQ-tRNA). The protein is S-adenosylmethionine:tRNA ribosyltransferase-isomerase of Shewanella baltica (strain OS185).